Here is a 193-residue protein sequence, read N- to C-terminus: Probable thymidylate kinase (193 aa).

7-14 (GIDGSGKT) serves as a coordination point for ATP.

It belongs to the thymidylate kinase family.

The enzyme catalyses dTMP + ATP = dTDP + ADP. In Pyrobaculum calidifontis (strain DSM 21063 / JCM 11548 / VA1), this protein is Probable thymidylate kinase.